Consider the following 387-residue polypeptide: UDP-Gal:alpha-D-GlcNAc-diphosphoundecaprenol alpha-1,3-galactosyltransferase (387 aa).

Belongs to the glycosyltransferase group 1 family. Glycosyltransferase 4 subfamily. Mg(2+) is required as a cofactor. It depends on Mn(2+) as a cofactor. Fe(2+) serves as cofactor.

It carries out the reaction N-acetyl-alpha-D-glucosaminyl-di-trans,octa-cis-undecaprenyl diphosphate + UDP-alpha-D-galactose = alpha-D-Gal-(1-&gt;3)-alpha-D-GlcNAc-di-trans,octa-cis-undecaprenyl diphosphate + UDP + H(+). The protein operates within bacterial outer membrane biogenesis; LPS O-antigen biosynthesis. Its function is as follows. Involved in the biosynthesis of the lipopolysaccharide (LPS) O-antigen region. Catalyzes the transfer of galactose from UDP-galactose to GlcNAc-undecaprenyl diphosphate via an alpha1,3-linkage. Has strict substrate specificity. The polypeptide is UDP-Gal:alpha-D-GlcNAc-diphosphoundecaprenol alpha-1,3-galactosyltransferase (Escherichia coli).